An 877-amino-acid chain; its full sequence is GPI ethanolamine phosphate transferase 2 (877 aa).

2 N-linked (GlcNAc...) asparagine glycosylation sites follow: Asn190 and Asn368. 5 helical membrane passes run 409 to 429, 443 to 463, 464 to 484, 528 to 548, and 570 to 590; these read VDIY…FGLF, YNWY…ASSL, IEEE…ALYF, VDLL…LIYS, and DFGS…SFSF. Asn611 is a glycosylation site (N-linked (GlcNAc...) asparagine). The next 6 membrane-spanning stretches (helical) occupy residues 634–654, 683–703, 716–736, 758–778, 817–837, and 854–876; these read IHLS…RIVL, EIVP…KLLA, LMII…FSMG, VFLV…FWSL, LAGF…CFNL, and FASW…ILAL.

It belongs to the PIGG/PIGN/PIGO family. PIGG subfamily.

Its subcellular location is the endoplasmic reticulum membrane. It participates in glycolipid biosynthesis; glycosylphosphatidylinositol-anchor biosynthesis. Its function is as follows. Ethanolamine phosphate transferase involved in glycosylphosphatidylinositol-anchor biosynthesis. Transfers ethanolamine phosphate to the GPI second mannose. In Debaryomyces hansenii (strain ATCC 36239 / CBS 767 / BCRC 21394 / JCM 1990 / NBRC 0083 / IGC 2968) (Yeast), this protein is GPI ethanolamine phosphate transferase 2 (LAS21).